The primary structure comprises 227 residues: Esterase OVCA2 (227 aa).

Residues Ser-120, Asp-180, and His-207 each act as charge relay system in the active site.

It belongs to the LovG family.

The enzyme catalyses a carboxylic ester + H2O = an alcohol + a carboxylate + H(+). In terms of biological role, exhibits ester hydrolase activity with a strong preference for long-chain alkyl ester substrates and high selectivity against a variety of short, branched, and substituted esters. Is able to hydrolyze ester bonds within a wide range of p-nitrophenyl derivatives (C2-C14) in vitro, with a strong preference toward substrates of &gt;8 carbons. The polypeptide is Esterase OVCA2 (ovca2) (Danio rerio (Zebrafish)).